Reading from the N-terminus, the 623-residue chain is Glutathione import ATP-binding protein GsiA (623 aa).

ABC transporter domains are found at residues 15 to 269 (VENL…RALL) and 314 to 564 (LRVR…RKLL). Residues 49-56 (GESGSGKS) and 357-364 (GESGSGKS) each bind ATP.

The protein belongs to the ABC transporter superfamily. Glutathione importer (TC 3.A.1.5.11) family. In terms of assembly, the complex is composed of two ATP-binding proteins (GsiA), two transmembrane proteins (GsiC and GsiD) and a solute-binding protein (GsiB).

The protein resides in the cell inner membrane. The enzyme catalyses glutathione(out) + ATP + H2O = glutathione(in) + ADP + phosphate + H(+). Functionally, part of the ABC transporter complex GsiABCD involved in glutathione import. Responsible for energy coupling to the transport system. This chain is Glutathione import ATP-binding protein GsiA, found in Shigella flexneri serotype 5b (strain 8401).